A 94-amino-acid polypeptide reads, in one-letter code: Co-chaperonin GroES (94 aa).

This sequence belongs to the GroES chaperonin family. As to quaternary structure, heptamer of 7 subunits arranged in a ring. Interacts with the chaperonin GroEL.

The protein localises to the cytoplasm. Its function is as follows. Together with the chaperonin GroEL, plays an essential role in assisting protein folding. The GroEL-GroES system forms a nano-cage that allows encapsulation of the non-native substrate proteins and provides a physical environment optimized to promote and accelerate protein folding. GroES binds to the apical surface of the GroEL ring, thereby capping the opening of the GroEL channel. The polypeptide is Co-chaperonin GroES (Parageobacillus thermoglucosidasius (Geobacillus thermoglucosidasius)).